Reading from the N-terminus, the 446-residue chain is Ribosomal protein uS12 methylthiotransferase RimO (446 aa).

Residues 6-116 (PNIGFISLGC…VMQQVHKYVP (111 aa)) enclose the MTTase N-terminal domain. Residues Cys15, Cys51, Cys80, Cys148, Cys152, and Cys155 each contribute to the [4Fe-4S] cluster site. One can recognise a Radical SAM core domain in the interval 134-375 (LTPKHYAYLK…MQLQQEISAA (242 aa)). The TRAM domain maps to 378 to 446 (QQKVGKVFTV…AYDLYASLIN (69 aa)).

The protein belongs to the methylthiotransferase family. RimO subfamily. [4Fe-4S] cluster is required as a cofactor.

The protein resides in the cytoplasm. The enzyme catalyses L-aspartate(89)-[ribosomal protein uS12]-hydrogen + (sulfur carrier)-SH + AH2 + 2 S-adenosyl-L-methionine = 3-methylsulfanyl-L-aspartate(89)-[ribosomal protein uS12]-hydrogen + (sulfur carrier)-H + 5'-deoxyadenosine + L-methionine + A + S-adenosyl-L-homocysteine + 2 H(+). In terms of biological role, catalyzes the methylthiolation of an aspartic acid residue of ribosomal protein uS12. In Pasteurella multocida (strain Pm70), this protein is Ribosomal protein uS12 methylthiotransferase RimO.